We begin with the raw amino-acid sequence, 764 residues long: Metabotropic glutamate receptor-like protein H (764 aa).

The signal sequence occupies residues 1-20; sequence MKNILKILILILICINKINC. At 21–393 the chain is on the extracellular side; sequence LDGDGKQFRM…EVEFSQSIQN (373 aa). N-linked (GlcNAc...) asparagine glycans are attached at residues asparagine 72, asparagine 260, asparagine 278, asparagine 344, and asparagine 379. A helical membrane pass occupies residues 394-414; sequence GFSITTGILIGITILMMIGII. The Cytoplasmic portion of the chain corresponds to 415–427; that stretch reads KYSKTPSMRSASP. A helical transmembrane segment spans residues 428–448; the sequence is IFLNFILAGGIIVYIGIIVWV. Topologically, residues 449–464 are extracellular; that stretch reads GPMSTHSCNARLWLVT. A helical transmembrane segment spans residues 465–485; that stretch reads LGFSTLIGSLVVKNFRIWLIF. At 486-500 the chain is on the cytoplasmic side; it reads DNPELKSIKITNYQL. Residues 501-521 traverse the membrane as a helical segment; sequence FPWVGACLVINIILMAILTSV. Over 522–552 the chain is Extracellular; sequence GDLKQIDAMNIDSLGKYEYMKVCKMNSSGAS. Residue asparagine 547 is glycosylated (N-linked (GlcNAc...) asparagine). The helical transmembrane segment at 553 to 573 threads the bilayer; it reads TLYTILAYFAALLLVGVFVSW. The Cytoplasmic portion of the chain corresponds to 574-587; the sequence is KIRIVDILEFNESG. The chain crosses the membrane as a helical span at residues 588–608; sequence AIANTLYAISFCLFVIVPLMI. Residues 609 to 617 are Extracellular-facing; that stretch reads SPQDMQSET. Residues 618–638 form a helical membrane-spanning segment; the sequence is IILCTTGLFITTAALLIIFIP. Residues 639 to 764 are Cytoplasmic-facing; that stretch reads KFWRVFRKGA…IIVNDSENNN (126 aa). The interval 664 to 764 is disordered; the sequence is ATARAESGSK…IIVNDSENNN (101 aa). Residues 671 to 690 are compositionally biased toward low complexity; it reads GSKGSNGNASSGNRTNRRGN. The segment covering 707-719 has biased composition (basic and acidic residues); the sequence is ENQKEKEKIKDDV. Residues 731 to 748 show a composition bias toward acidic residues; sequence FTDEASDTDNNEFNDIEL.

It in the N-terminal section; belongs to the BMP lipoprotein family. The protein in the C-terminal section; belongs to the G-protein coupled receptor 3 family. GABA-B receptor subfamily.

Its subcellular location is the membrane. This is Metabotropic glutamate receptor-like protein H (grlH) from Dictyostelium discoideum (Social amoeba).